We begin with the raw amino-acid sequence, 725 residues long: Ribosomal RNA large subunit methyltransferase K/L (725 aa).

The THUMP domain maps to 46–157 (VGYRLCLWSR…KGQAVLSLDL (112 aa)).

It belongs to the methyltransferase superfamily. RlmKL family.

It is found in the cytoplasm. It carries out the reaction guanosine(2445) in 23S rRNA + S-adenosyl-L-methionine = N(2)-methylguanosine(2445) in 23S rRNA + S-adenosyl-L-homocysteine + H(+). It catalyses the reaction guanosine(2069) in 23S rRNA + S-adenosyl-L-methionine = N(2)-methylguanosine(2069) in 23S rRNA + S-adenosyl-L-homocysteine + H(+). Its function is as follows. Specifically methylates the guanine in position 2445 (m2G2445) and the guanine in position 2069 (m7G2069) of 23S rRNA. The chain is Ribosomal RNA large subunit methyltransferase K/L from Stutzerimonas stutzeri (strain A1501) (Pseudomonas stutzeri).